Reading from the N-terminus, the 390-residue chain is MMQSATVPAEGAVKGLPEMLGVPMQQIPQCAGCNQHILDKFILKVLDRHWHSSCLKCADCQMQLADRCFSRAGSVYCKEDFFKRFGTKCTACQQGIPPTQVVRKAQDFVYHLHCFACIICNRQLATGDEFYLMEDGRLVCKEDYETAKQNDDSEAGAKRPRTTITAKQLETLKNAYKNSPKPARHVREQLSSETGLDMRVVQVWFQNRRAKEKRLKKDAGRHRWGQFYKSVKRSRGSSKQEKESSAEDCGVSDSELSFREDQILSELGHTNRIYGNVGDVTGGQLMNGSFSMDGTGQSYQDLRDGSPYGIPQSPSSISSLPSHAPLLNGLDYTVDSNLGIIAHAGQGVSQTLRAMAGGPTSDISTGSSVGYPDFPTSPGSWLDEMDHPPF.

LIM zinc-binding domains are found at residues 28 to 87 and 88 to 150; these read PQCA…RFGT and KCTA…AKQN. The homeobox DNA-binding region spans 157-216; the sequence is AKRPRTTITAKQLETLKNAYKNSPKPARHVREQLSSETGLDMRVVQVWFQNRRAKEKRLK. An interaction with DNA region spans residues 161 to 181; sequence RTTITAKQLETLKNAYKNSPK. The segment at 199-211 is interaction with 5-mCpG DNA; the sequence is RVVQVWFQNRRAK. Disordered stretches follow at residues 230 to 253 and 356 to 390; these read SVKR…GVSD and AGGP…HPPF.

It is found in the nucleus. Its function is as follows. May play a critical role in the development of respiratory control mechanisms and in the normal growth and maturation of the lung. Binds preferentially to methylated DNA. This chain is LIM/homeobox protein Lhx4 (LHX4), found in Homo sapiens (Human).